Reading from the N-terminus, the 776-residue chain is FT-interacting protein 4 (776 aa).

The span at 1 to 16 shows a compositional bias: basic and acidic residues; sequence MQRPPPEDFSLKETKP. A disordered region spans residues 1-23; it reads MQRPPPEDFSLKETKPHLGGGKV. C2 domains lie at 22–142, 181–305, and 346–474; these read KVTG…PQWY, VSGT…SRWF, and YSSD…THSY. Ca(2+) contacts are provided by D55, D61, D108, D110, and D115. The next 3 helical transmembrane spans lie at 577-597, 608-628, and 719-739; these read IMGV…ICVW, ILFI…FLYL, and LFVL…FQVV.

It belongs to the MCTP family. As to quaternary structure, interacts with and regulates subcellular localization and trafficking of STM. Ca(2+) serves as cofactor. Highly expressed in both vegetative and inflorescence shoot apical meristems (SAMs). Accumulates in root meristems. Observed in flowers.

It localises to the endoplasmic reticulum membrane. It is found in the cytoplasm. The protein resides in the vesicle. Its subcellular location is the cell membrane. The protein localises to the endosome membrane. It localises to the golgi apparatus membrane. Functionally, required for proliferation and differentiation of shoot stem cells in the shoot apical meristem (SAM), thus determining the appropriate balance between the maintenance of shoot stem cells and their differentiation into other aboveground plant parts via the control of subcellular localization and intercellular trafficking of STM in the shoot apex. Prevents intracellular trafficking of STM to the plasma membrane in cells in the peripheral shoot meristem region thus facilitating STM recycling to the nucleus to maintain stem cells. May function as a signaling molecule by regulating the trafficking of other regulators. This chain is FT-interacting protein 4, found in Arabidopsis thaliana (Mouse-ear cress).